Here is a 380-residue protein sequence, read N- to C-terminus: XK-related protein 9 (380 aa).

8 consecutive transmembrane segments (helical) span residues 10–30, 39–59, 81–101, 167–187, 228–248, 264–284, 294–314, and 329–349; these read LLSAAGLVMYVADVCTDAALV, VVCAALTLLFIVVGLLVTQVF, LPVVSKRGLATLHLFGVGIFI, CSLVQLVGMSFSFMNAAWALV, ALLLIFSIYSTVGLAIVWLLG, SLEFLYRAIVGVILTFTFFNV, ITYYFLHSLINVLSLLLLFVL, and TLMAACSVLGLVCLVLYYLLL.

Belongs to the XK family.

It is found in the cell membrane. It catalyses the reaction a 1,2-diacyl-sn-glycero-3-phospho-L-serine(in) = a 1,2-diacyl-sn-glycero-3-phospho-L-serine(out). Phospholipid scramblase that promotes phosphatidylserine exposure on apoptotic cell surface. Phosphatidylserine is a specific marker only present at the surface of apoptotic cells and acts as a specific signal for engulfment. The chain is XK-related protein 9 from Tetraodon nigroviridis (Spotted green pufferfish).